The chain runs to 172 residues: Adenine phosphoribosyltransferase (172 aa).

It belongs to the purine/pyrimidine phosphoribosyltransferase family. In terms of assembly, homodimer.

Its subcellular location is the cytoplasm. The catalysed reaction is AMP + diphosphate = 5-phospho-alpha-D-ribose 1-diphosphate + adenine. It participates in purine metabolism; AMP biosynthesis via salvage pathway; AMP from adenine: step 1/1. Catalyzes a salvage reaction resulting in the formation of AMP, that is energically less costly than de novo synthesis. The polypeptide is Adenine phosphoribosyltransferase (Streptococcus agalactiae serotype III (strain NEM316)).